We begin with the raw amino-acid sequence, 374 residues long: MAKRDYYEVLGVNLNATEAEVKKAFRRLAMKYHPDRNPGDKDAEVKFKEAREAYEVLCDSRKRASYDQFGHAGVEQTFGGAGAGGFGFGDLGDIFGDIFGDIFSGARGGQAREQRGADLAYELVLSLEEAVHGLSRTIKVPTWINCKTCNGSGAKGSSPATCPRCNGSGQMRMQHGFLQVQQTCSVCRGRGQVIKDPCTDCHGQGRQQQTKTLSVKIPPGIDTGDRIRLAGEGEAGLFGAPPGDLYVQVRVKPHPLFHREGNDLHSEVPIDFTTAALGGEMEIPTLDGSVRLTIPPETQGGKQFRLRGKGVKALRSGAVGDLICHIVVETPVKLSPEQKDYLKQFAELLKKDEKNHSPRTRNWFDSVKDFFTSK.

Residues 5 to 70 (DYYEVLGVNL…RKRASYDQFG (66 aa)) form the J domain. The CR-type zinc finger occupies 133-210 (GLSRTIKVPT…CHGQGRQQQT (78 aa)). Zn(2+)-binding residues include cysteine 146, cysteine 149, cysteine 162, cysteine 165, cysteine 184, cysteine 187, cysteine 198, and cysteine 201. CXXCXGXG motif repeat units follow at residues 146–153 (CKTCNGSG), 162–169 (CPRCNGSG), 184–191 (CSVCRGRG), and 198–205 (CTDCHGQG).

Belongs to the DnaJ family. Homodimer. The cofactor is Zn(2+).

It localises to the cytoplasm. Participates actively in the response to hyperosmotic and heat shock by preventing the aggregation of stress-denatured proteins and by disaggregating proteins, also in an autonomous, DnaK-independent fashion. Unfolded proteins bind initially to DnaJ; upon interaction with the DnaJ-bound protein, DnaK hydrolyzes its bound ATP, resulting in the formation of a stable complex. GrpE releases ADP from DnaK; ATP binding to DnaK triggers the release of the substrate protein, thus completing the reaction cycle. Several rounds of ATP-dependent interactions between DnaJ, DnaK and GrpE are required for fully efficient folding. Also involved, together with DnaK and GrpE, in the DNA replication of plasmids through activation of initiation proteins. The chain is Chaperone protein DnaJ from Coxiella burnetii (strain RSA 331 / Henzerling II).